Consider the following 117-residue polypeptide: Chondroitin proteoglycan 7 (117 aa).

An N-terminal signal peptide occupies residues 1–19 (MQTITLLALLACIAVPIFA). A disordered region spans residues 31–97 (VEASGEGSGE…SGENLSNGIV (67 aa)). 2 stretches are compositionally biased toward low complexity: residues 32-41 (EASGEGSGES) and 48-57 (ESSGEGSGES). O-linked (Xyl...) (chondroitin sulfate) serine glycosylation is found at Ser-66, Ser-70, Ser-74, Ser-84, and Ser-88. Positions 75 to 95 (GASDAVLESSGEGSGENLSNG) are enriched in low complexity. Residue Asn-91 is glycosylated (N-linked (GlcNAc...) asparagine).

The sequence is that of Chondroitin proteoglycan 7 (cpg-7) from Caenorhabditis briggsae.